Consider the following 323-residue polypeptide: Galactosylgalactosylxylosylprotein 3-beta-glucuronosyltransferase 2 (323 aa).

The Cytoplasmic segment spans residues 1 to 2 (MK). A helical; Signal-anchor for type II membrane protein transmembrane segment spans residues 3-23 (SALFTRFFILLPWILIVIIML). Residues 24–323 (DVDTRRPVPP…YHLDTVKIEV (300 aa)) are Lumenal-facing. Residues 51 to 80 (RLPLRRGGPAHGTQKRNQSRPQPQPEPQLP) are disordered. Asn67 carries N-linked (GlcNAc...) asparagine glycosylation. Residues 87-89 (PTY), Asp118, Arg155, Arg160, and 185-187 (DDD) each bind UDP-alpha-D-glucuronate. A Mn(2+)-binding site is contributed by Asp187. The segment at 234–243 (WRADRPFAID) is interaction with galactose moiety of substrate glycoprotein. Glu273 (proton donor/acceptor) is an active-site residue. N-linked (GlcNAc...) asparagine glycosylation is present at Asn292. Position 300-302 (300-302 (HTR)) interacts with UDP-alpha-D-glucuronate.

This sequence belongs to the glycosyltransferase 43 family. As to quaternary structure, homodimer. Mn(2+) serves as cofactor. In terms of tissue distribution, expressed in the trachea, retina, spinal cord, hippocampus and other brain regions, and, at lower levels, in testis and ovary.

It is found in the golgi apparatus membrane. The enzyme catalyses 3-O-(beta-D-galactosyl-(1-&gt;3)-beta-D-galactosyl-(1-&gt;4)-beta-D-xylosyl)-L-seryl-[protein] + UDP-alpha-D-glucuronate = 3-O-(beta-D-GlcA-(1-&gt;3)-beta-D-Gal-(1-&gt;3)-beta-D-Gal-(1-&gt;4)-beta-D-Xyl)-L-seryl-[protein] + UDP + H(+). The protein operates within protein modification; protein glycosylation. Involved in the biosynthesis of L2/HNK-1 carbohydrate epitope on both glycolipids and glycoproteins. In Homo sapiens (Human), this protein is Galactosylgalactosylxylosylprotein 3-beta-glucuronosyltransferase 2 (B3GAT2).